Reading from the N-terminus, the 305-residue chain is D-alanine--D-alanine ligase (305 aa).

The ATP-grasp domain maps to 107–299 (KKMLCYHGIA…FDELVERILA (193 aa)). 134-186 (PDYPLVVKPAREGSTIGISIVHDEQELAAGLEEAFRHDDLVLVEQFIAGAEVT) lines the ATP pocket. Positions 254, 266, and 268 each coordinate Mg(2+).

The protein belongs to the D-alanine--D-alanine ligase family. The cofactor is Mg(2+). Requires Mn(2+) as cofactor.

It is found in the cytoplasm. The enzyme catalyses 2 D-alanine + ATP = D-alanyl-D-alanine + ADP + phosphate + H(+). It functions in the pathway cell wall biogenesis; peptidoglycan biosynthesis. Its function is as follows. Cell wall formation. This chain is D-alanine--D-alanine ligase, found in Syntrophotalea carbinolica (strain DSM 2380 / NBRC 103641 / GraBd1) (Pelobacter carbinolicus).